A 1648-amino-acid chain; its full sequence is Homeostatic regulator of DAG (1648 aa).

The region spanning 5 to 101 (IPPTLPLDLQ…YRVTTINSTS (97 aa)) is the DMAP1-binding domain. N-linked (GlcNAc...) asparagine glycans are attached at residues asparagine 28, asparagine 71, and asparagine 98. 2 disordered regions span residues 52 to 73 (PYTP…RNTS) and 96 to 130 (TINS…ENGS). The span at 60 to 71 (NSRKSKHLHRRN) shows a compositional bias: basic residues. Composition is skewed to polar residues over residues 96 to 105 (TINSTSANNT) and 113 to 128 (YTAS…SDEN). The residue at position 99 (serine 99) is a Phosphoserine. Residues asparagine 128, asparagine 151, and asparagine 209 are each glycosylated (N-linked (GlcNAc...) asparagine). A fatty acyl-AMP ligase-like domain 1 region spans residues 158-893 (AMTDSLPLIL…VEKKFLNNDL (736 aa)). Residues 228-248 (VIEFTIALLGCFISGMAAVPV) traverse the membrane as a helical segment. 5 N-linked (GlcNAc...) asparagine glycosylation sites follow: asparagine 288, asparagine 328, asparagine 575, asparagine 644, and asparagine 730. Phosphoserine is present on serine 751. 4 N-linked (GlcNAc...) asparagine glycosylation sites follow: asparagine 881, asparagine 917, asparagine 995, and asparagine 1009. Residues 950–1648 (VKPKLALQCS…LLSDYEKDNI (699 aa)) are fatty acyl-AMP ligase-like domain 2. The helical transmembrane segment at 1061 to 1081 (YVAMIMACLYCNLLVIPLPSV) threads the bilayer. Asparagine 1198 carries N-linked (GlcNAc...) asparagine glycosylation. The helical transmembrane segment at 1224–1244 (GLGFMFSCLLGIYTGASTCLF) threads the bilayer. 8 N-linked (GlcNAc...) asparagine glycosylation sites follow: asparagine 1301, asparagine 1302, asparagine 1447, asparagine 1472, asparagine 1488, asparagine 1565, asparagine 1597, and asparagine 1634.

It is found in the vacuole membrane. Its subcellular location is the mitochondrion membrane. Functionally, homeostatic regulator of a chemically distinct subset of diacylglycerols (DAGs) with C36 chain length that prevents the toxic accumulation of these specific DAGs in the logarithmic growth phase, which otherwise leads to endoplasmic reticulum stress. Maintains the basal level of DAG subspecies by directly facilitating DAG to triacylglycerol (TAG) conversion process, possibly via adenylation activity of its FLD domains. Does not affect the abundant DAG species (representing over 90% of total DAG pool), comprised of C32 and C34 chain lengths. Required for vacuole fusion-mediated osmoadaptation. In Saccharomyces cerevisiae (strain ATCC 204508 / S288c) (Baker's yeast), this protein is Homeostatic regulator of DAG.